Consider the following 177-residue polypeptide: Co-chaperone protein HscB homolog (177 aa).

Positions 8–80 (DYFSLFGMPR…LSRAQYLLEL (73 aa)) constitute a J domain.

The protein belongs to the HscB family. In terms of assembly, interacts with HscA and stimulates its ATPase activity.

Co-chaperone involved in the maturation of iron-sulfur cluster-containing proteins. Seems to help targeting proteins to be folded toward HscA. The sequence is that of Co-chaperone protein HscB homolog from Azoarcus sp. (strain BH72).